The primary structure comprises 314 residues: Hydroxyacyl-coenzyme A dehydrogenase, mitochondrial (314 aa).

A mitochondrion-targeting transit peptide spans 1-12 (MAFVTRQFVRSM). NAD(+)-binding positions include 34–39 (GGGLMG) and Asp57. Ser73 serves as a coordination point for CoA. Lys75 carries the N6-acetyllysine modification. Lys80 contributes to the CoA binding site. Position 80 is an N6-succinyllysine (Lys80). Residues Lys81 and Lys87 each carry the N6-acetyllysine; alternate modification. 2 positions are modified to N6-succinyllysine; alternate: Lys81 and Lys87. Glu122 serves as a coordination point for NAD(+). An N6-acetyllysine modification is found at Lys125. Lys127 is a binding site for NAD(+). At Lys127 the chain carries N6-(2-hydroxyisobutyryl)lysine. At Lys136 the chain carries N6-acetyllysine; alternate. Lys136 carries the N6-succinyllysine; alternate modification. Residues Ser149 and Asn173 each contribute to the NAD(+) site. Residue Ser149 participates in CoA binding. At Lys179 the chain carries N6-acetyllysine. Residues Lys185, Lys192, and Lys202 each carry the N6-acetyllysine; alternate modification. N6-succinyllysine; alternate is present on residues Lys185, Lys192, and Lys202. Lys206 bears the N6-succinyllysine mark. N6-acetyllysine; alternate is present on residues Lys212 and Lys241. Residues Lys212 and Lys241 each carry the N6-succinyllysine; alternate modification. Lys305 is an NAD(+) binding site. Lys312 carries the N6-acetyllysine; alternate modification. Lys312 carries the post-translational modification N6-succinyllysine; alternate.

Belongs to the 3-hydroxyacyl-CoA dehydrogenase family. Homodimer. Interacts with GLUD1; this interaction inhibits the activation of glutamate dehydrogenase 1 (GLUD1). In terms of processing, succinylation at Lys-81, adjacent to a coenzyme A binding site. Desuccinylated by SIRT5.

It is found in the mitochondrion matrix. It carries out the reaction a (3S)-3-hydroxyacyl-CoA + NAD(+) = a 3-oxoacyl-CoA + NADH + H(+). The enzyme catalyses (3S)-3-hydroxybutanoyl-CoA + NAD(+) = acetoacetyl-CoA + NADH + H(+). The catalysed reaction is (3S)-hydroxydecanoyl-CoA + NAD(+) = 3-oxodecanoyl-CoA + NADH + H(+). It catalyses the reaction (3S)-hydroxyhexadecanoyl-CoA + NAD(+) = 3-oxohexadecanoyl-CoA + NADH + H(+). It participates in lipid metabolism; fatty acid beta-oxidation. Mitochondrial fatty acid beta-oxidation enzyme that catalyzes the third step of the beta-oxidation cycle for medium and short-chain 3-hydroxy fatty acyl-CoAs (C4 to C10). Plays a role in the control of insulin secretion by inhibiting the activation of glutamate dehydrogenase 1 (GLUD1), an enzyme that has an important role in regulating amino acid-induced insulin secretion. Plays a role in the maintenance of normal spermatogenesis through the reduction of fatty acid accumulation in the testes. This Rattus norvegicus (Rat) protein is Hydroxyacyl-coenzyme A dehydrogenase, mitochondrial (Hadh).